A 313-amino-acid chain; its full sequence is Proclavaminate amidinohydrolase (313 aa).

Mn(2+)-binding residues include His121, Asp144, His146, Asp148, Asp235, and Asp237.

The protein belongs to the arginase family. In terms of assembly, homohexamer. Mn(2+) serves as cofactor.

The enzyme catalyses amidinoproclavaminate + H2O = proclavaminate + urea. Its pathway is antibiotic biosynthesis; clavulanate biosynthesis; clavulanate from D-glyceraldehyde 3-phosphate and L-arginine: step 4/8. This Streptomyces clavuligerus protein is Proclavaminate amidinohydrolase (pah).